The sequence spans 2264 residues: RNA1 polyprotein (2264 aa).

Residues 566-1156 are Cytoplasmic-facing; it reads MCTALAAGIF…MGRTYLAENG (591 aa). The SF3 helicase domain occupies 750–916; the sequence is TEGPNELHKR…PGVLFDPDNP (167 aa). 780–787 serves as a coordination point for ATP; the sequence is GQRHCGKS. The chain crosses the membrane as a helical span at residues 1157 to 1177; sequence CGILMIAAALILILVSAWGFW. The Lumenal portion of the chain corresponds to 1178-1203; that stretch reads KLFIGLFSGSMSLGAAIVGMSAVDIK. Positions 1227–1436 constitute a Peptidase C3 domain; it reads AYAKSQAGDG…WADIMPPNTL (210 aa). Catalysis depends on for picornain 3C-like protease activity residues H1270, E1308, and C1400. Residues 1713 to 1841 form the RdRp catalytic domain; sequence NEAINCDYSG…SVSPSIASWF (129 aa).

Belongs to the nepoviruses RNA1 polyprotein family. Specific enzymatic cleavages by picornain 3C-like protease in vivo yield mature proteins. Picornain 3C-like protease is autocatalytically processed. Post-translationally, VPg is uridylylated by the polymerase and is covalently linked to the 5'-end of genomic RNA. This uridylylated form acts as a nucleotide-peptide primer for the polymerase.

The protein localises to the host endoplasmic reticulum lumen. Its subcellular location is the host endoplasmic reticulum membrane. It catalyses the reaction RNA(n) + a ribonucleoside 5'-triphosphate = RNA(n+1) + diphosphate. In terms of biological role, picornain 3C-like protease is a thiol protease that cleaves the P1 and P2 polyproteins. The polypeptide is RNA1 polyprotein (Beet ringspot virus (BRSV)).